The chain runs to 278 residues: Biotin synthase (278 aa).

In terms of domain architecture, Radical SAM core spans 1 to 227; it reads MQIMLCAISN…QSVVMVAGGR (227 aa). Positions 16, 20, and 23 each coordinate [4Fe-4S] cluster. 3 residues coordinate [2Fe-2S] cluster: Cys60, Cys95, and Cys153.

It belongs to the radical SAM superfamily. Biotin synthase family. As to quaternary structure, homodimer. Requires [4Fe-4S] cluster as cofactor. [2Fe-2S] cluster is required as a cofactor.

It carries out the reaction (4R,5S)-dethiobiotin + (sulfur carrier)-SH + 2 reduced [2Fe-2S]-[ferredoxin] + 2 S-adenosyl-L-methionine = (sulfur carrier)-H + biotin + 2 5'-deoxyadenosine + 2 L-methionine + 2 oxidized [2Fe-2S]-[ferredoxin]. It functions in the pathway cofactor biosynthesis; biotin biosynthesis; biotin from 7,8-diaminononanoate: step 2/2. Its function is as follows. Catalyzes the conversion of dethiobiotin (DTB) to biotin by the insertion of a sulfur atom into dethiobiotin via a radical-based mechanism. This chain is Biotin synthase, found in Campylobacter jejuni subsp. jejuni serotype O:23/36 (strain 81-176).